Reading from the N-terminus, the 1594-residue chain is NAD-specific glutamate dehydrogenase (1594 aa).

Lys-816 is a catalytic residue.

Belongs to the Glu/Leu/Phe/Val dehydrogenases family. In terms of assembly, interacts with (unphosphorylated) GarA.

It catalyses the reaction L-glutamate + NAD(+) + H2O = 2-oxoglutarate + NH4(+) + NADH + H(+). With respect to regulation, activity is inhibited by unphosphorylated GarA. Stimulated by manganese and magnesium. Catalyzes the reversible conversion of L-glutamate to 2-oxoglutarate. Highly specific for NAD. The chain is NAD-specific glutamate dehydrogenase (gdh) from Mycolicibacterium smegmatis (strain ATCC 700084 / mc(2)155) (Mycobacterium smegmatis).